A 556-amino-acid polypeptide reads, in one-letter code: 5-aminolevulinate synthase, mitochondrial (556 aa).

The transit peptide at 1–46 directs the protein to the mitochondrion; sequence MDSLARQSAKICPFVSRVTSSMQQVQVLHKTNMSAMAQQCPVMRRA. Arg-105, Ser-218, and Lys-237 together coordinate substrate. The pyridoxal 5'-phosphate site is built by Ser-270, His-298, and Thr-342. Residue Lys-345 is part of the active site. Lys-345 bears the N6-(pyridoxal phosphate)lysine mark. Thr-374 and Ser-375 together coordinate pyridoxal 5'-phosphate. Position 460 (Thr-460) interacts with substrate.

This sequence belongs to the class-II pyridoxal-phosphate-dependent aminotransferase family. Homodimer. Requires pyridoxal 5'-phosphate as cofactor.

Its subcellular location is the mitochondrion matrix. The catalysed reaction is succinyl-CoA + glycine + H(+) = 5-aminolevulinate + CO2 + CoA. Its pathway is porphyrin-containing compound metabolism; protoporphyrin-IX biosynthesis; 5-aminolevulinate from glycine: step 1/1. Functionally, catalyzes the synthesis of 5-aminolevulinate (ALA) from succinyl-CoA and glycine, the first and rate-limiting step in heme biosynthesis. In Eremothecium gossypii (strain ATCC 10895 / CBS 109.51 / FGSC 9923 / NRRL Y-1056) (Yeast), this protein is 5-aminolevulinate synthase, mitochondrial (HEM1).